The following is a 314-amino-acid chain: Olfactory receptor 1E16 (314 aa).

Topologically, residues 1-29 (MTERNKTVISQFLLLGLPIPPEHQQLFYA) are extracellular. Asparagine 5 is a glycosylation site (N-linked (GlcNAc...) asparagine). The chain crosses the membrane as a helical span at residues 30 to 50 (LFLVMYLTTVLGNLIIIILII). Residues 51–57 (LDSHLHT) are Cytoplasmic-facing. The helical transmembrane segment at 58 to 78 (PMYLFLSNLSFSDLCFSSVTM) threads the bilayer. Residues 79 to 97 (PKLLQNMQSQVPSIPYAGC) lie on the Extracellular side of the membrane. Cysteine 97 and cysteine 179 are joined by a disulfide. A helical transmembrane segment spans residues 98–118 (LAQIYFFLFFGDLGNFLLVAM). Topologically, residues 119 to 143 (AYDRYVAICYPLHYTTIMSPRLCVS) are cytoplasmic. The helical transmembrane segment at 144-164 (LVVLSWVLTTFHAMLHTLLMA) threads the bilayer. Topologically, residues 165 to 196 (RLSFCEDNVIPHYFCDMSALLKLACSDTRVNE) are extracellular. Residues 197–217 (VVIFIVASIFLVLPFALITMS) traverse the membrane as a helical segment. The Cytoplasmic segment spans residues 218 to 239 (YVRIVSSILKVPSSQGIYKAFS). A helical membrane pass occupies residues 240–260 (TCGSHLSVVSLFYGTVIGLYL). Topologically, residues 261–271 (SPSSNNSTVKD) are extracellular. N-linked (GlcNAc...) asparagine glycans are attached at residues asparagine 265 and asparagine 266. A helical transmembrane segment spans residues 272–292 (TVMSLMYTVVTPMLNPFIYSL). Residues 293 to 314 (RNRDIKGALERVFCKRKIQLNL) lie on the Cytoplasmic side of the membrane.

It belongs to the G-protein coupled receptor 1 family. As to expression, olfactory epithelium.

It localises to the cell membrane. Odorant receptor. Activated by a lily-derived aldehyde as well as other odorants. May signal through an inositol 1,4,5-trisphosphate (IP3) second messenger system. This is Olfactory receptor 1E16 from Mus musculus (Mouse).